The sequence spans 269 residues: MPDFSMSNLAVAFSITLAAGLFTVLGSGLVMFSKTPNPRVLSFGLAFAGGAMVYVSLTEIFSKSSEAFAEIYDKDHAFAAATMAFLAGMGGIALIDRLVPNPHETLDAQDPSFQESKRRHIARVGMMAAFAITAHNFPEGLATFFATLENPAVGMPLALAIAIHNIPEGISIAAPVYFATRSRKKTVWACLLSGLAEPLGAALGYLVLQPFLSPAVFGSVFGVIAGVMVFLALDELLPAAKRYSDGHETVYGLTMGMAVIAVSLVLFHF.

Transmembrane regions (helical) follow at residues 12 to 32 (AFSI…LVMF), 41 to 61 (LSFG…TEIF), 75 to 95 (DHAF…IALI), 126 to 146 (MMAA…TFFA), 152 to 172 (AVGM…GISI), 187 to 207 (VWAC…GYLV), 211 to 231 (FLSP…MVFL), and 249 to 269 (TVYG…LFHF). The Fe(2+) site is built by Asn-136 and Glu-139. Glu-139 and His-164 together coordinate Zn(2+). Residues Asn-165, Glu-168, and Glu-197 each contribute to the Fe(2+) site. Zn(2+) is bound at residue Glu-168.

It belongs to the ZIP transporter (TC 2.A.5) family. ZupT subfamily.

It is found in the cell inner membrane. The enzyme catalyses Zn(2+)(in) = Zn(2+)(out). Mediates zinc uptake. May also transport other divalent cations. The chain is Zinc transporter ZupT from Neisseria meningitidis serogroup A / serotype 4A (strain DSM 15465 / Z2491).